Consider the following 182-residue polypeptide: Probable nicotinate-nucleotide adenylyltransferase (182 aa).

Belongs to the NadD family.

It carries out the reaction nicotinate beta-D-ribonucleotide + ATP + H(+) = deamido-NAD(+) + diphosphate. It participates in cofactor biosynthesis; NAD(+) biosynthesis; deamido-NAD(+) from nicotinate D-ribonucleotide: step 1/1. In terms of biological role, catalyzes the reversible adenylation of nicotinate mononucleotide (NaMN) to nicotinic acid adenine dinucleotide (NaAD). This is Probable nicotinate-nucleotide adenylyltransferase from Aliarcobacter butzleri (strain RM4018) (Arcobacter butzleri).